The following is a 184-amino-acid chain: Peptide deformylase (184 aa).

The Fe cation site is built by cysteine 111 and histidine 154. Glutamate 155 is a catalytic residue. Histidine 158 contacts Fe cation.

It belongs to the polypeptide deformylase family. Fe(2+) is required as a cofactor.

The enzyme catalyses N-terminal N-formyl-L-methionyl-[peptide] + H2O = N-terminal L-methionyl-[peptide] + formate. In terms of biological role, removes the formyl group from the N-terminal Met of newly synthesized proteins. Requires at least a dipeptide for an efficient rate of reaction. N-terminal L-methionine is a prerequisite for activity but the enzyme has broad specificity at other positions. This chain is Peptide deformylase, found in Lactobacillus helveticus (strain DPC 4571).